The following is a 94-amino-acid chain: Gibberellin-regulated protein 11 (94 aa).

The signal sequence occupies residues 1–23; that stretch reads MAVFRVLLASLLISLLVLDFVHA.

Belongs to the GASA family. Six disulfide bonds may be present.

It is found in the secreted. Gibberellin-regulated protein that may function in hormonal controlled steps of development such as seed germination, flowering and seed maturation. This Arabidopsis thaliana (Mouse-ear cress) protein is Gibberellin-regulated protein 11 (GASA11).